The primary structure comprises 461 residues: D-arabinono-1,4-lactone oxidase (461 aa).

An FAD-binding PCMH-type domain is found at 24–194 (FSAISLGLRC…VDITISVVPA (171 aa)). Histidine 61 is modified (pros-8alpha-FAD histidine).

This sequence belongs to the oxygen-dependent FAD-linked oxidoreductase family. The cofactor is FAD.

It localises to the mitochondrion membrane. The catalysed reaction is D-arabinono-1,4-lactone + O2 = dehydro-D-arabinono-1,4-lactone + H2O2 + H(+). It functions in the pathway cofactor biosynthesis; D-erythroascorbate biosynthesis; dehydro-D-arabinono-1,4-lactone from D-arabinose: step 2/2. This Schizosaccharomyces pombe (strain 972 / ATCC 24843) (Fission yeast) protein is D-arabinono-1,4-lactone oxidase (alo1).